We begin with the raw amino-acid sequence, 260 residues long: Pyridoxine 5'-phosphate synthase (260 aa).

3-amino-2-oxopropyl phosphate-binding residues include Asn10 and Arg21. His46 acts as the Proton acceptor in catalysis. 1-deoxy-D-xylulose 5-phosphate contacts are provided by Arg48 and His53. Glu76 acts as the Proton acceptor in catalysis. Thr113 is a 1-deoxy-D-xylulose 5-phosphate binding site. His204 acts as the Proton donor in catalysis. 3-amino-2-oxopropyl phosphate is bound by residues Asp205 and 227-228 (GH).

This sequence belongs to the PNP synthase family. As to quaternary structure, homooctamer; tetramer of dimers.

Its subcellular location is the cytoplasm. The catalysed reaction is 3-amino-2-oxopropyl phosphate + 1-deoxy-D-xylulose 5-phosphate = pyridoxine 5'-phosphate + phosphate + 2 H2O + H(+). The protein operates within cofactor biosynthesis; pyridoxine 5'-phosphate biosynthesis; pyridoxine 5'-phosphate from D-erythrose 4-phosphate: step 5/5. In terms of biological role, catalyzes the complicated ring closure reaction between the two acyclic compounds 1-deoxy-D-xylulose-5-phosphate (DXP) and 3-amino-2-oxopropyl phosphate (1-amino-acetone-3-phosphate or AAP) to form pyridoxine 5'-phosphate (PNP) and inorganic phosphate. The sequence is that of Pyridoxine 5'-phosphate synthase from Xylella fastidiosa (strain 9a5c).